The chain runs to 600 residues: DDB1- and CUL4-associated factor 8-like protein 1 (600 aa).

Residues 1-122 (MSHQEGSTGG…EEEQPRMCPR (122 aa)) are disordered. Composition is skewed to acidic residues over residues 74–83 (SSSEDVELES) and 96–115 (EETE…EEEE). WD repeat units follow at residues 194 to 233 (SHAG…PVLN), 237 to 278 (GHDI…YCEN), 284 to 324 (KHRG…PASK), 332 to 372 (DKKV…KKEN), 388 to 427 (DFPT…GAQY), 435 to 475 (RNND…IIQF), and 479 to 518 (DRGD…ATEL). Residues 562 to 600 (PGWRDHGAEFPDEEELDESSSTSDTSEEEGQDRVQCIPS) are disordered.

The protein belongs to the WD repeat DCAF8 family.

In Homo sapiens (Human), this protein is DDB1- and CUL4-associated factor 8-like protein 1 (DCAF8L1).